Consider the following 117-residue polypeptide: UPF0251 protein cbdbA217 (117 aa).

The protein belongs to the UPF0251 family.

This is UPF0251 protein cbdbA217 from Dehalococcoides mccartyi (strain CBDB1).